We begin with the raw amino-acid sequence, 507 residues long: Sensor protein CseC (507 aa).

The disordered stretch occupies residues 1 to 42; the sequence is MRGFFRQRRSVSPPGHPYDRTGPGEHAGPGARTGPGGRPRVL. Residues 25 to 37 are compositionally biased toward gly residues; sequence EHAGPGARTGPGG. The next 2 helical transmembrane spans lie at 60-80 and 183-203; these read LSAA…LVVH and ALVI…VLIG. One can recognise an HAMP domain in the interval 204–260; that stretch reads GQLSRRLREAAAAANRVASGEPDVRVRDAIGGVVRDETDDVARAVDAMADALQQRIE. A Histidine kinase domain is found at 268 to 470; sequence DIAHELRTPV…VAVLWLPEHA (203 aa). At His-271 the chain carries Phosphohistidine; by autocatalysis. A disordered region spans residues 472–507; it reads TNTGSYPMLPDRSKSGASSSARDMSREASQGMSRKP. Residues 486–507 show a composition bias toward polar residues; sequence SGASSSARDMSREASQGMSRKP.

The protein localises to the cell membrane. The enzyme catalyses ATP + protein L-histidine = ADP + protein N-phospho-L-histidine.. Member of the two-component regulatory system CseB/CseC involved in the stability of the cell envelope, through activation of transcription of RNA polymerase sigma-E factor. CseC functions as a membrane-associated protein kinase that phosphorylates CseB in response to changes in the cell envelope. The protein is Sensor protein CseC (cseC) of Streptomyces coelicolor (strain ATCC BAA-471 / A3(2) / M145).